A 229-amino-acid chain; its full sequence is 3,4-dihydroxy-2-butanone 4-phosphate synthase (229 aa).

Residues 28–29 (RE), Asp-33, 164–168 (RGGHT), and Glu-188 contribute to the D-ribulose 5-phosphate site. Residue Glu-29 coordinates Mg(2+). His-167 lines the Mg(2+) pocket.

The protein belongs to the DHBP synthase family. In terms of assembly, homodimer. Mg(2+) serves as cofactor. Mn(2+) is required as a cofactor.

The catalysed reaction is D-ribulose 5-phosphate = (2S)-2-hydroxy-3-oxobutyl phosphate + formate + H(+). Its pathway is cofactor biosynthesis; riboflavin biosynthesis; 2-hydroxy-3-oxobutyl phosphate from D-ribulose 5-phosphate: step 1/1. Functionally, catalyzes the conversion of D-ribulose 5-phosphate to formate and 3,4-dihydroxy-2-butanone 4-phosphate. The protein is 3,4-dihydroxy-2-butanone 4-phosphate synthase of Methanothermobacter thermautotrophicus (strain ATCC 29096 / DSM 1053 / JCM 10044 / NBRC 100330 / Delta H) (Methanobacterium thermoautotrophicum).